The following is an 87-amino-acid chain: HssA/B-like protein 18 (87 aa).

It belongs to the hssA/B family.

The polypeptide is HssA/B-like protein 18 (hssl18) (Dictyostelium discoideum (Social amoeba)).